Reading from the N-terminus, the 1016-residue chain is UvrABC system protein A (1016 aa).

32 to 39 contributes to the ATP binding site; that stretch reads GVSGSGKS. The C4-type zinc-finger motif lies at 259 to 286; sequence CPEHGSVLEELEPRSFSFNSPYGACGDC. 2 ABC transporter domains span residues 315–627 and 647–975; these read WTKK…KNSL and GNGK…EYLR. 679–686 serves as a coordination point for ATP; that stretch reads GPSGSGKS. Residues 778-804 form a C4-type zinc finger; sequence CEHCKGDGVMKIEMNFLPDIYVPCEVC. Residues 984–1016 form a disordered region; sequence EPRARGEKAEKPAKAKAPAKKRTKKQTELVEAD. The span at 985 to 996 shows a compositional bias: basic and acidic residues; the sequence is PRARGEKAEKPA.

The protein belongs to the ABC transporter superfamily. UvrA family. As to quaternary structure, forms a heterotetramer with UvrB during the search for lesions.

The protein localises to the cytoplasm. In terms of biological role, the UvrABC repair system catalyzes the recognition and processing of DNA lesions. UvrA is an ATPase and a DNA-binding protein. A damage recognition complex composed of 2 UvrA and 2 UvrB subunits scans DNA for abnormalities. When the presence of a lesion has been verified by UvrB, the UvrA molecules dissociate. In Deinococcus radiodurans (strain ATCC 13939 / DSM 20539 / JCM 16871 / CCUG 27074 / LMG 4051 / NBRC 15346 / NCIMB 9279 / VKM B-1422 / R1), this protein is UvrABC system protein A.